The following is a 545-amino-acid chain: Zinc finger protein 697 (545 aa).

A disordered region spans residues 1-143 (MKQEDNQGVC…EQPAPPVLPW (143 aa)). A Glycyl lysine isopeptide (Lys-Gly) (interchain with G-Cter in SUMO2) cross-link involves residue K2. Over residues 23–36 (DFEDSEDREGDPEE) the composition is skewed to acidic residues. A compositionally biased stretch (basic and acidic residues) spans 45 to 55 (DTNKREGHPEP). Composition is skewed to acidic residues over residues 79–94 (LSEEEGVSVRGEEDDQ) and 118–135 (EDDDESAGENRLEEEEEQ). 11 C2H2-type zinc fingers span residues 189–211 (TICPDCGESFSPGAAFLQHQRIH), 261–283 (FRCGECGKGFSRNTYLTNHLRLH), 289–311 (NLCADCGKSFSWRADLLKHRRLH), 317–339 (YPCPECGEAFSLSSHLLSHRRAH), 353–375 (FACGECGKGFVRRSHLANHQRIH), 381–403 (HGCGECGKRFSWRSDLVKHQRVH), 409–431 (YMCSECGETFSVSSHLFTHKRTH), 437–459 (YVCRECGKGFGRNSHLVNHLRVH), 465–487 (FRCGQCEKRFSDFSTLTQHQRTH), 493–515 (YTCIECGKSFIQSSHLIRHRRIH), and 521–543 (HKCAGCGKGFRYKTHLAQHQKLH).

This sequence belongs to the krueppel C2H2-type zinc-finger protein family.

The protein resides in the nucleus. Functionally, RNA-interacting protein with a high number of miRNA targets. Acts as a damage-induced regulator of muscle remodeling by mediating the interferon gamma response in muscle cells. This chain is Zinc finger protein 697, found in Homo sapiens (Human).